Consider the following 616-residue polypeptide: Dihydroxy-acid dehydratase (616 aa).

Aspartate 81 is a Mg(2+) binding site. Cysteine 122 serves as a coordination point for [2Fe-2S] cluster. Residues aspartate 123 and lysine 124 each contribute to the Mg(2+) site. Lysine 124 bears the N6-carboxylysine mark. A [2Fe-2S] cluster-binding site is contributed by cysteine 195. A Mg(2+)-binding site is contributed by glutamate 491. The active-site Proton acceptor is the serine 517.

Belongs to the IlvD/Edd family. In terms of assembly, homodimer. [2Fe-2S] cluster is required as a cofactor. The cofactor is Mg(2+).

It catalyses the reaction (2R)-2,3-dihydroxy-3-methylbutanoate = 3-methyl-2-oxobutanoate + H2O. The catalysed reaction is (2R,3R)-2,3-dihydroxy-3-methylpentanoate = (S)-3-methyl-2-oxopentanoate + H2O. The protein operates within amino-acid biosynthesis; L-isoleucine biosynthesis; L-isoleucine from 2-oxobutanoate: step 3/4. Its pathway is amino-acid biosynthesis; L-valine biosynthesis; L-valine from pyruvate: step 3/4. In terms of biological role, functions in the biosynthesis of branched-chain amino acids. Catalyzes the dehydration of (2R,3R)-2,3-dihydroxy-3-methylpentanoate (2,3-dihydroxy-3-methylvalerate) into 2-oxo-3-methylpentanoate (2-oxo-3-methylvalerate) and of (2R)-2,3-dihydroxy-3-methylbutanoate (2,3-dihydroxyisovalerate) into 2-oxo-3-methylbutanoate (2-oxoisovalerate), the penultimate precursor to L-isoleucine and L-valine, respectively. This chain is Dihydroxy-acid dehydratase, found in Klebsiella pneumoniae subsp. pneumoniae (strain ATCC 700721 / MGH 78578).